Consider the following 210-residue polypeptide: Chaperone protein TorD (210 aa).

This sequence belongs to the TorD/DmsD family. TorD subfamily.

Its subcellular location is the cytoplasm. In terms of biological role, involved in the biogenesis of TorA. Acts on TorA before the insertion of the molybdenum cofactor and, as a result, probably favors a conformation of the apoenzyme that is competent for acquiring the cofactor. The sequence is that of Chaperone protein TorD from Salmonella schwarzengrund (strain CVM19633).